The primary structure comprises 209 residues: Large ribosomal subunit protein uL3 (209 aa).

Belongs to the universal ribosomal protein uL3 family. Part of the 50S ribosomal subunit. Forms a cluster with proteins L14 and L19.

In terms of biological role, one of the primary rRNA binding proteins, it binds directly near the 3'-end of the 23S rRNA, where it nucleates assembly of the 50S subunit. This Oceanobacillus iheyensis (strain DSM 14371 / CIP 107618 / JCM 11309 / KCTC 3954 / HTE831) protein is Large ribosomal subunit protein uL3.